The chain runs to 776 residues: 5-methyltetrahydropteroyltriglutamate--homocysteine methyltransferase (776 aa).

5-methyltetrahydropteroyltri-L-glutamate contacts are provided by residues 16-19 (RELK) and Lys-112. L-homocysteine-binding positions include 432–434 (IGS) and Glu-485. L-methionine-binding positions include 432 to 434 (IGS) and Glu-485. 5-methyltetrahydropteroyltri-L-glutamate contacts are provided by residues 516–517 (RC) and Trp-562. Asp-600 contributes to the L-homocysteine binding site. Asp-600 is a binding site for L-methionine. Residue Glu-606 participates in 5-methyltetrahydropteroyltri-L-glutamate binding. Residues His-642, Cys-644, and Glu-666 each contribute to the Zn(2+) site. His-695 functions as the Proton donor in the catalytic mechanism. Zn(2+) is bound at residue Cys-727. Residues 755–776 (HAGAVHAGTPATRAEHAESALA) form a disordered region. The span at 767 to 776 (RAEHAESALA) shows a compositional bias: basic and acidic residues.

This sequence belongs to the vitamin-B12 independent methionine synthase family. Zn(2+) is required as a cofactor.

It catalyses the reaction 5-methyltetrahydropteroyltri-L-glutamate + L-homocysteine = tetrahydropteroyltri-L-glutamate + L-methionine. It participates in amino-acid biosynthesis; L-methionine biosynthesis via de novo pathway; L-methionine from L-homocysteine (MetE route): step 1/1. In terms of biological role, catalyzes the transfer of a methyl group from 5-methyltetrahydrofolate to homocysteine resulting in methionine formation. This is 5-methyltetrahydropteroyltriglutamate--homocysteine methyltransferase from Ralstonia nicotianae (strain ATCC BAA-1114 / GMI1000) (Ralstonia solanacearum).